A 110-amino-acid chain; its full sequence is Small heat shock protein hspG11 (110 aa).

Positions 30-110 (KTIIDILPPM…KSTSTSSTFR (81 aa)) constitute a sHSP domain. The tract at residues 78–110 (KDLNKQHNNNNNNNNNNNNLVIEKSTSTSSTFR) is disordered. Residues 85-96 (NNNNNNNNNNNN) are compositionally biased toward low complexity. A compositionally biased stretch (polar residues) spans 101–110 (KSTSTSSTFR).

It belongs to the small heat shock protein (HSP20) family.

This chain is Small heat shock protein hspG11 (hspG11), found in Dictyostelium discoideum (Social amoeba).